Consider the following 421-residue polypeptide: Glucose-1-phosphate adenylyltransferase (421 aa).

Alpha-D-glucose 1-phosphate contacts are provided by residues Y108, G173, 188-189 (EK), and S206.

This sequence belongs to the bacterial/plant glucose-1-phosphate adenylyltransferase family. Homotetramer.

It catalyses the reaction alpha-D-glucose 1-phosphate + ATP + H(+) = ADP-alpha-D-glucose + diphosphate. It participates in glycan biosynthesis; glycogen biosynthesis. In terms of biological role, involved in the biosynthesis of ADP-glucose, a building block required for the elongation reactions to produce glycogen. Catalyzes the reaction between ATP and alpha-D-glucose 1-phosphate (G1P) to produce pyrophosphate and ADP-Glc. The chain is Glucose-1-phosphate adenylyltransferase from Mesorhizobium japonicum (strain LMG 29417 / CECT 9101 / MAFF 303099) (Mesorhizobium loti (strain MAFF 303099)).